The primary structure comprises 137 residues: Basic phospholipase A2 beta-bungarotoxin A-AL4 chain (137 aa).

An N-terminal signal peptide occupies residues 1 to 10 (LAVCVSLLGA). Residues 11–18 (ANIPPQHL) constitute a propeptide that is removed on maturation. Intrachain disulfides connect C45/C137, C47/C63, C62/C118, C69/C111, C79/C104, and C97/C109. 3 residues coordinate Ca(2+): Y46, G48, and G50. Residue H66 is part of the active site. D67 is a Ca(2+) binding site. D112 is an active-site residue.

The protein belongs to the phospholipase A2 family. Group I subfamily. D49 sub-subfamily. In terms of assembly, heterodimer; disulfide-linked. The A chains have phospholipase A2 activity and the B chains show homology with the basic protease inhibitors. It depends on Ca(2+) as a cofactor. As to expression, expressed by the venom gland.

Its subcellular location is the secreted. It carries out the reaction a 1,2-diacyl-sn-glycero-3-phosphocholine + H2O = a 1-acyl-sn-glycero-3-phosphocholine + a fatty acid + H(+). In terms of biological role, snake venom phospholipase A2 (PLA2) that inhibits neuromuscular transmission by blocking acetylcholine release from the nerve termini. PLA2 catalyzes the calcium-dependent hydrolysis of the 2-acyl groups in 3-sn-phosphoglycerides. The polypeptide is Basic phospholipase A2 beta-bungarotoxin A-AL4 chain (Bungarus multicinctus (Many-banded krait)).